The following is a 205-amino-acid chain: Thymidylate kinase (205 aa).

9 to 16 (GPEGSGKT) is a binding site for ATP.

It belongs to the thymidylate kinase family.

The enzyme catalyses dTMP + ATP = dTDP + ADP. Its function is as follows. Phosphorylation of dTMP to form dTDP in both de novo and salvage pathways of dTTP synthesis. This Staphylococcus aureus (strain NCTC 8325 / PS 47) protein is Thymidylate kinase.